Reading from the N-terminus, the 154-residue chain is Superoxide dismutase [Cu-Zn] (154 aa).

Cu cation is bound by residues H47, H49, and H64. Residues C58 and C147 are joined by a disulfide bond. Residues H64, H72, H81, and D84 each contribute to the Zn(2+) site. H121 serves as a coordination point for Cu cation. R144 serves as a coordination point for substrate.

Belongs to the Cu-Zn superoxide dismutase family. In terms of assembly, homodimer. Cu cation serves as cofactor. Requires Zn(2+) as cofactor.

It is found in the cytoplasm. It catalyses the reaction 2 superoxide + 2 H(+) = H2O2 + O2. Destroys radicals which are normally produced within the cells and which are toxic to biological systems. The chain is Superoxide dismutase [Cu-Zn] (SOD1) from Eremothecium gossypii (strain ATCC 10895 / CBS 109.51 / FGSC 9923 / NRRL Y-1056) (Yeast).